Consider the following 531-residue polypeptide: Jacalin-related lectin 16 (531 aa).

4 consecutive Jacalin-type lectin domains span residues 1-87 (MDRS…YFTW), 90-232 (PTKM…YFTT), 235-378 (LISL…YFRP), and 385-528 (TEKV…NVLP).

It belongs to the jacalin lectin family.

The chain is Jacalin-related lectin 16 (JAL16) from Arabidopsis thaliana (Mouse-ear cress).